Consider the following 188-residue polypeptide: Ribosome maturation factor RimM (188 aa).

Residues 96–169 form the PRC barrel domain; sequence DDEFYYADLE…TLLIDPLAAG (74 aa).

This sequence belongs to the RimM family. As to quaternary structure, binds ribosomal protein uS19.

It localises to the cytoplasm. Functionally, an accessory protein needed during the final step in the assembly of 30S ribosomal subunit, possibly for assembly of the head region. Essential for efficient processing of 16S rRNA. May be needed both before and after RbfA during the maturation of 16S rRNA. It has affinity for free ribosomal 30S subunits but not for 70S ribosomes. In Rhizobium etli (strain ATCC 51251 / DSM 11541 / JCM 21823 / NBRC 15573 / CFN 42), this protein is Ribosome maturation factor RimM.